The chain runs to 626 residues: Division abnormally delayed protein (626 aa).

The first 26 residues, 1 to 26 (MAARSVRLAQLLLFTLLCGFVGLSAA), serve as a signal peptide directing secretion. Over residues 41 to 52 (LHSATTHHRRRL) the composition is skewed to basic residues. A disordered region spans residues 41 to 65 (LHSATTHHRRRLQRDSRAKDAVGGS). N97 carries N-linked (GlcNAc...) asparagine; atypical glycosylation. N-linked (GlcNAc...) asparagine glycans are attached at residues N101, N150, and N187. The interval 533 to 607 (NSIQATHDIQ…GKTSGSNPLE (75 aa)) is disordered. S549, S569, S573, and S601 each carry an O-linked (Xyl...) (heparan sulfate) serine glycan. The span at 565–575 (GAHGSGDGSGD) shows a compositional bias: gly residues. G602 is lipidated: GPI-anchor amidated glycine. The propeptide at 603-626 (SNPLEGTATWMLLTLVTMLFSSCS) is removed in mature form.

This sequence belongs to the glypican family. As to quaternary structure, interacts with nord; the interaction promotes dally degradation. Interacts with Magu. As part of the dally/ Magu complex, associates with fwe (isoforms ubi, LoseA and LoseB) and is unable to interact with fwe independently of Magu.

The protein resides in the cell membrane. In terms of biological role, cell surface proteoglycan that bears heparan sulfate. Functions as a coreceptor for growth factors and morphogens, such as the products of dpp, to regulate signaling and distribution of these ligands. Required for cell division patterning during postembryonic development of the nervous system. Plays a role in dpp/BMP signaling possibly by stabilizing dpp and thereby creating a morphological gradient during wing development. Might have a role in testis development. Functions with magu and fwe in a mechanism of scaling, which utilises apoptosis to ensure that the dpp patterning gradient remains proportional to the size of the growing wing. In this mechanism, fwe represses dally and Magu-dependent activity in expanding the gradient, and dally/Magu inhibits fwe-dependent apoptosis to keep cell death rate low. When the levels of these different proteins are optimally regulated the gradient correctly scales with organ growth but when this fails, fwe-mediated apoptosis is activated to trim the developing tissue to match the correct size of the gradient. The chain is Division abnormally delayed protein (dally) from Drosophila melanogaster (Fruit fly).